The following is a 271-amino-acid chain: Ribosomal RNA small subunit methyltransferase I (271 aa).

The protein belongs to the methyltransferase superfamily. RsmI family.

The protein resides in the cytoplasm. The catalysed reaction is cytidine(1402) in 16S rRNA + S-adenosyl-L-methionine = 2'-O-methylcytidine(1402) in 16S rRNA + S-adenosyl-L-homocysteine + H(+). Its function is as follows. Catalyzes the 2'-O-methylation of the ribose of cytidine 1402 (C1402) in 16S rRNA. In Campylobacter fetus subsp. fetus (strain 82-40), this protein is Ribosomal RNA small subunit methyltransferase I.